Reading from the N-terminus, the 54-residue chain is Large ribosomal subunit protein bL33A (54 aa).

Belongs to the bacterial ribosomal protein bL33 family.

The chain is Large ribosomal subunit protein bL33A from Mycobacterium marinum (strain ATCC BAA-535 / M).